The chain runs to 343 residues: Protein RecA (343 aa).

64 to 71 (GPESSGKT) is an ATP binding site.

The protein belongs to the RecA family.

The protein localises to the cytoplasm. Can catalyze the hydrolysis of ATP in the presence of single-stranded DNA, the ATP-dependent uptake of single-stranded DNA by duplex DNA, and the ATP-dependent hybridization of homologous single-stranded DNAs. It interacts with LexA causing its activation and leading to its autocatalytic cleavage. The chain is Protein RecA from Bacillus cereus (strain B4264).